A 249-amino-acid chain; its full sequence is 2,3-bisphosphoglycerate-dependent phosphoglycerate mutase (249 aa).

Substrate-binding positions include 7–14, 20–21, arginine 59, 86–89, lysine 97, 113–114, and 182–183; these read RHGESEWN, TG, ERHY, RR, and GN. Catalysis depends on histidine 8, which acts as the Tele-phosphohistidine intermediate. The active-site Proton donor/acceptor is the glutamate 86.

It belongs to the phosphoglycerate mutase family. BPG-dependent PGAM subfamily.

It catalyses the reaction (2R)-2-phosphoglycerate = (2R)-3-phosphoglycerate. It participates in carbohydrate degradation; glycolysis; pyruvate from D-glyceraldehyde 3-phosphate: step 3/5. In terms of biological role, catalyzes the interconversion of 2-phosphoglycerate and 3-phosphoglycerate. The polypeptide is 2,3-bisphosphoglycerate-dependent phosphoglycerate mutase (Lachnoclostridium phytofermentans (strain ATCC 700394 / DSM 18823 / ISDg) (Clostridium phytofermentans)).